Consider the following 107-residue polypeptide: Nucleoid-associated protein GOX0603 (107 aa).

The protein belongs to the YbaB/EbfC family. In terms of assembly, homodimer.

It is found in the cytoplasm. Its subcellular location is the nucleoid. Binds to DNA and alters its conformation. May be involved in regulation of gene expression, nucleoid organization and DNA protection. This is Nucleoid-associated protein GOX0603 from Gluconobacter oxydans (strain 621H) (Gluconobacter suboxydans).